The chain runs to 787 residues: Protein translocase subunit SecA (787 aa).

ATP-binding positions include Gln85, 103 to 107, and Asp492; that span reads GEGKT.

This sequence belongs to the SecA family. Monomer and homodimer. Part of the essential Sec protein translocation apparatus which comprises SecA, SecYEG and auxiliary proteins SecDF. Other proteins may also be involved.

The protein localises to the cell membrane. It localises to the cytoplasm. The catalysed reaction is ATP + H2O + cellular proteinSide 1 = ADP + phosphate + cellular proteinSide 2.. In terms of biological role, part of the Sec protein translocase complex. Interacts with the SecYEG preprotein conducting channel. Has a central role in coupling the hydrolysis of ATP to the transfer of proteins into and across the cell membrane, serving as an ATP-driven molecular motor driving the stepwise translocation of polypeptide chains across the membrane. This chain is Protein translocase subunit SecA, found in Latilactobacillus sakei subsp. sakei (strain 23K) (Lactobacillus sakei subsp. sakei).